A 370-amino-acid chain; its full sequence is Dihydrolipoyllysine-residue acetyltransferase component of acetoin cleaving system (370 aa).

The 76-residue stretch at 4 to 79 (IHTLTMPKWG…PVGALLAVVV (76 aa)) folds into the Lipoyl-binding domain. K45 carries the N6-lipoyllysine modification. One can recognise an AB hydrolase-1 domain in the interval 135-355 (PLVLVHGFGG…EAGHMVQMEA (221 aa)).

The cofactor is (R)-lipoate.

The enzyme catalyses N(6)-[(R)-dihydrolipoyl]-L-lysyl-[protein] + acetyl-CoA = N(6)-[(R)-S(8)-acetyldihydrolipoyl]-L-lysyl-[protein] + CoA. The protein operates within ketone degradation; acetoin degradation. This chain is Dihydrolipoyllysine-residue acetyltransferase component of acetoin cleaving system (acoC), found in Pseudomonas putida (Arthrobacter siderocapsulatus).